A 222-amino-acid chain; its full sequence is Translation initiation factor 6 (222 aa).

It belongs to the eIF-6 family.

In terms of biological role, binds to the 50S ribosomal subunit and prevents its association with the 30S ribosomal subunit to form the 70S initiation complex. This is Translation initiation factor 6 from Methanocorpusculum labreanum (strain ATCC 43576 / DSM 4855 / Z).